The primary structure comprises 119 residues: Anamorsin homolog (119 aa).

The disordered stretch occupies residues 33 to 119 (LKQATKGEDC…KVKLNLTDDI (87 aa)). Cysteine 42, cysteine 49, cysteine 52, and cysteine 54 together coordinate [2Fe-2S] cluster. The interval 42 to 54 (CTTRRRACKNCVC) is fe-S binding site A. Cysteine 81, cysteine 84, cysteine 92, and cysteine 95 together coordinate [4Fe-4S] cluster. Short sequence motifs (cx2C motif) lie at residues 81 to 84 (CGNC) and 92 to 95 (CANC). Residues 81–95 (CGNCAKGDAFRCANC) are fe-S binding site B.

This sequence belongs to the anamorsin family. As to quaternary structure, monomer. [2Fe-2S] cluster is required as a cofactor. [4Fe-4S] cluster serves as cofactor.

It localises to the cytoplasm. Its subcellular location is the mitochondrion intermembrane space. Its function is as follows. Component of the cytosolic iron-sulfur (Fe-S) protein assembly (CIA) machinery. Required for the maturation of extramitochondrial Fe-S proteins. Part of an electron transfer chain functioning in an early step of cytosolic Fe-S biogenesis, facilitating the de novo assembly of a [4Fe-4S] cluster on the cytosolic Fe-S scaffold complex. Electrons are transferred from NADPH via a FAD- and FMN-containing diflavin oxidoreductase. Together with the diflavin oxidoreductase, also required for the assembly of the diferric tyrosyl radical cofactor of ribonucleotide reductase (RNR), probably by providing electrons for reduction during radical cofactor maturation in the catalytic small subunit. This chain is Anamorsin homolog, found in Leishmania braziliensis.